The chain runs to 398 residues: 1-deoxy-D-xylulose 5-phosphate reductoisomerase (398 aa).

Positions 11, 12, 13, 14, 38, 39, and 125 each coordinate NADPH. K126 is a 1-deoxy-D-xylulose 5-phosphate binding site. E127 lines the NADPH pocket. Residue D151 participates in Mn(2+) binding. The 1-deoxy-D-xylulose 5-phosphate site is built by S152, E153, S179, and H202. Position 153 (E153) interacts with Mn(2+). G208 is an NADPH binding site. 1-deoxy-D-xylulose 5-phosphate is bound by residues S215, N220, K221, and E224. A Mn(2+)-binding site is contributed by E224.

The protein belongs to the DXR family. The cofactor is Mg(2+). Requires Mn(2+) as cofactor.

The enzyme catalyses 2-C-methyl-D-erythritol 4-phosphate + NADP(+) = 1-deoxy-D-xylulose 5-phosphate + NADPH + H(+). The protein operates within isoprenoid biosynthesis; isopentenyl diphosphate biosynthesis via DXP pathway; isopentenyl diphosphate from 1-deoxy-D-xylulose 5-phosphate: step 1/6. Catalyzes the NADPH-dependent rearrangement and reduction of 1-deoxy-D-xylulose-5-phosphate (DXP) to 2-C-methyl-D-erythritol 4-phosphate (MEP). This chain is 1-deoxy-D-xylulose 5-phosphate reductoisomerase, found in Burkholderia multivorans (strain ATCC 17616 / 249).